Consider the following 188-residue polypeptide: Elongation factor P (188 aa).

The protein belongs to the elongation factor P family.

It is found in the cytoplasm. Its pathway is protein biosynthesis; polypeptide chain elongation. Its function is as follows. Involved in peptide bond synthesis. Stimulates efficient translation and peptide-bond synthesis on native or reconstituted 70S ribosomes in vitro. Probably functions indirectly by altering the affinity of the ribosome for aminoacyl-tRNA, thus increasing their reactivity as acceptors for peptidyl transferase. The sequence is that of Elongation factor P from Caulobacter sp. (strain K31).